The sequence spans 251 residues: Phosphosulfolactate synthase (251 aa).

This sequence belongs to the phosphosulfolactate synthase family. As to quaternary structure, homotrimer. Mg(2+) is required as a cofactor.

The enzyme catalyses (2R)-O-phospho-3-sulfolactate = phosphoenolpyruvate + sulfite + H(+). The protein operates within cofactor biosynthesis; coenzyme M biosynthesis; sulfoacetaldehyde from phosphoenolpyruvate and sulfite: step 1/4. Functionally, catalyzes the addition of sulfite to phosphoenolpyruvate (PEP) to yield (2R)-phospho-3-sulfolactate (PSL). The protein is Phosphosulfolactate synthase (comA) of Methanocaldococcus jannaschii (strain ATCC 43067 / DSM 2661 / JAL-1 / JCM 10045 / NBRC 100440) (Methanococcus jannaschii).